The following is a 512-amino-acid chain: Citrate synthase (512 aa).

Catalysis depends on residues His-288, His-327, and Asp-383. The disordered stretch occupies residues 483-512; it reads AIPKTATGSKSQLSASIEQSFGEKISPQSH. Over residues 488-501 the composition is skewed to polar residues; sequence ATGSKSQLSASIEQ.

Belongs to the citrate synthase family.

Its subcellular location is the cytoplasm. The catalysed reaction is oxaloacetate + acetyl-CoA + H2O = citrate + CoA + H(+). The protein operates within carbohydrate metabolism; tricarboxylic acid cycle; isocitrate from oxaloacetate: step 1/2. The protein is Citrate synthase (gltA) of Dictyostelium discoideum (Social amoeba).